Consider the following 431-residue polypeptide: Glucose-1-phosphate adenylyltransferase (431 aa).

A beta-D-fructose 1,6-bisphosphate-binding site is contributed by Lys39. Residues Arg40, His46, and Arg52 each contribute to the AMP site. Tyr114 serves as a coordination point for alpha-D-glucose 1-phosphate. Arg130 serves as a coordination point for AMP. Alpha-D-glucose 1-phosphate contacts are provided by residues Gly179, 194-195 (EK), and Ser212. The AMP site is built by Glu370 and Arg386. Residues 419–423 (REMLR) and 429–431 (QER) contribute to the beta-D-fructose 1,6-bisphosphate site.

It belongs to the bacterial/plant glucose-1-phosphate adenylyltransferase family. Homotetramer.

The catalysed reaction is alpha-D-glucose 1-phosphate + ATP + H(+) = ADP-alpha-D-glucose + diphosphate. It participates in glycan biosynthesis; glycogen biosynthesis. Allosterically activated by fructose-1,6-bisphosphate (F16BP) and inhibited by AMP. Its function is as follows. Involved in the biosynthesis of ADP-glucose, a building block required for the elongation reactions to produce glycogen. Catalyzes the reaction between ATP and alpha-D-glucose 1-phosphate (G1P) to produce pyrophosphate and ADP-Glc. This chain is Glucose-1-phosphate adenylyltransferase, found in Escherichia coli O7:K1 (strain IAI39 / ExPEC).